The chain runs to 858 residues: Tetratricopeptide repeat protein 7A (858 aa).

Ser-51 carries the phosphoserine modification. 6 TPR repeats span residues 121–157 (CEAMLILGKLHYVEGSYRDAISMYARAGIDDMSMENK), 177–210 (ERLPNSIASRFRLTEREEEVITCFERASWIAQVF), 414–447 (FHLWYQVALSMVACGKSAYAVSLLRECVKLRPSD), 497–531 (YSLQATDATLKSKQDELHRKALQTLERAQQLAPSD), 533–565 (QVILYVSLQLALVRQISSAMEQLQEALKVRKDD), and 566–599 (AHALHLLALLFSAQKHHQHALDVVNMAITEHPEN). A Phosphoserine modification is found at Ser-182. Residues Ser-647, Ser-678, Ser-679, and Ser-690 each carry the phosphoserine modification. Thr-693 is modified (phosphothreonine). TPR repeat units lie at residues 745-778 (HSVLYMRGRLAEVKGNLEEAKQLYKEALTVNPDG), 780-812 (RIMHSLGLMLSRLGHKSLAQKVLRDAVERQSTC), and 813-846 (HEAWQGLGEVLQAQGQNEAAVDCFLTALELEASS).

Component of a phosphatidylinositol 4-kinase (PI4K) complex, composed of PI4KA, EFR3 (EFR3A or EFR3B), TTC7 (TTC7A or TTC7B) and HYCC (HYCC1 or HYCC2). Interacts with PI4KA. Interaction with PI4KA is direct. Interacts with EFR3 (EFR3A or EFR3B), interaction is direct. Interacts with HYCC (HYCC1 or HYCC2), interaction is direct. Association with the PI4K complex is strongly reduced by TMEM150A. In terms of tissue distribution, expressed in epithelial cells of the intestine, thymus, and pancreas (at protein level).

It is found in the cytoplasm. The protein localises to the cell membrane. Its function is as follows. Component of a complex required to localize phosphatidylinositol 4-kinase (PI4K) to the plasma membrane. The complex acts as a regulator of phosphatidylinositol 4-phosphate (PtdIns(4)P) synthesis. In the complex, plays a central role in bridging PI4KA to EFR3B and HYCC1, via direct interactions. The protein is Tetratricopeptide repeat protein 7A of Homo sapiens (Human).